The chain runs to 54 residues: Toxin AnmTx Cj 1c-1 (54 aa).

A signal peptide spans 1–7 (MLNKRGV). 3 cysteine pairs are disulfide-bonded: Cys-9–Cys-50, Cys-11–Cys-41, and Cys-33–Cys-51. Glu-53 is subject to Glutamic acid 1-amide.

Belongs to the sea anemone sodium channel inhibitory toxin family. Type I subfamily. Contains 3 disulfide bonds.

It localises to the secreted. The protein resides in the nematocyst. Functionally, in vivo, induces marked paralysis on shrimps (C.multidentata) at 10-20 seconds after injection and a weak toxicity when injected into insect larvae (M.domestica). The sequence is that of Toxin AnmTx Cj 1c-1 from Epiactis japonica (Sea anemone).